Consider the following 316-residue polypeptide: Probable cell division protein WhiA (316 aa).

The segment at residues 275-309 (TLKELGEMVSGGKISKSGINHRLRKIDEIAEKLRA) is a DNA-binding region (H-T-H motif).

Belongs to the WhiA family.

Functionally, involved in cell division and chromosome segregation. The chain is Probable cell division protein WhiA from Bacillus cereus (strain B4264).